The following is a 427-amino-acid chain: Dorsalin-1 (427 aa).

An N-terminal signal peptide occupies residues 1–20; the sequence is MHYFGVLAALSVFNIIACLT. Positions 21 to 318 are excised as a propeptide; it reads RGKPLENWKK…PRQHSSRSKR (298 aa). Residues Asn71, Asn136, Asn265, and Asn292 are each glycosylated (N-linked (GlcNAc...) asparagine). The interval 288–321 is disordered; it reads KLGKNDSSSEEEQREEKAIARPRQHSSRSKRSIG. The span at 307 to 321 shows a compositional bias: basic residues; sequence ARPRQHSSRSKRSIG. Cystine bridges form between Cys325/Cys391, Cys354/Cys424, and Cys358/Cys426.

Belongs to the TGF-beta family. In terms of assembly, homodimer; disulfide-linked. Expressed selectively in the dorsal neural tube. Lower levels seen in kidney and myotomal cells.

The protein resides in the secreted. Functionally, appears to regulate cell differentiation within the neural tube. May regulate the differentiation of cell types along the dorsoventral axis of the neural tube, acting in conjunction with distinct ventralizing signals from the notochord and floor plate. Controls the cell differentiation in the neural tube in several ways: (1) promotes the differentiation of cell types that derive from the dorsal neural tube. (2) ensures that the dorsal neural tube is refractory to ventralizing species from the notochord. (3) can diffuse and influence the fate of cells in more ventral regions of the neural tube. This Gallus gallus (Chicken) protein is Dorsalin-1 (DSL1).